The sequence spans 617 residues: Vacuolar protein sorting-associated protein 33B (617 aa).

Belongs to the STXBP/unc-18/SEC1 family. In terms of assembly, probable core component of the class C core vacuole/endosome tethering (CORVET) complex. The common core is composed of the class C Vps proteins vps-11, vps-16 and vps-18, and which further associates with vps-8 and vps-33.2. Interacts with spe-39. Broadly expressed in somatic tissues including the pharynx, intestine, spermatheca, and in coelomocytes. Expressed in the lining of the gut lumen.

The protein localises to the early endosome. The protein resides in the late endosome membrane. It is found in the lysosome membrane. It localises to the cytoplasmic vesicle. Its subcellular location is the clathrin-coated vesicle. The protein localises to the recycling endosome. In terms of biological role, plays a role in vesicle-mediated protein trafficking to lysosomal compartments and in membrane docking/fusion reactions of late endosomes/lysosomes. Believed to act as a component of the putative CORVET endosomal tethering complex which is proposed to be involved in the rab-5-to-rab-7 endosome conversion probably implicating sand-1, and via binding SNAREs and SNARE complexes to mediate tethering and docking events during SNARE-mediated membrane fusion. The CORVET complex is proposed to function as a rab-5 effector to mediate early endosome fusion probably in specific endosome subpopulations. Most likely within the CORVET complex, it is involved in the fusion of endocytic compartments. Required for sperm development and function. The chain is Vacuolar protein sorting-associated protein 33B from Caenorhabditis elegans.